Consider the following 133-residue polypeptide: Large ribosomal subunit protein uL22 (133 aa).

It belongs to the universal ribosomal protein uL22 family. Part of the 50S ribosomal subunit.

Functionally, this protein binds specifically to 23S rRNA; its binding is stimulated by other ribosomal proteins, e.g. L4, L17, and L20. It is important during the early stages of 50S assembly. It makes multiple contacts with different domains of the 23S rRNA in the assembled 50S subunit and ribosome. The globular domain of the protein is located near the polypeptide exit tunnel on the outside of the subunit, while an extended beta-hairpin is found that lines the wall of the exit tunnel in the center of the 70S ribosome. This chain is Large ribosomal subunit protein uL22, found in Granulibacter bethesdensis (strain ATCC BAA-1260 / CGDNIH1).